We begin with the raw amino-acid sequence, 291 residues long: Protease HtpX homolog (291 aa).

2 helical membrane-spanning segments follow: residues 4-24 and 38-58; these read VFLF…SARL and LGML…ISLL. A Zn(2+)-binding site is contributed by histidine 144. The active site involves glutamate 145. Histidine 148 is a binding site for Zn(2+). 2 helical membrane-spanning segments follow: residues 159–179 and 199–219; these read LIQG…AYAL and ISSI…VMYF. Residue glutamate 224 coordinates Zn(2+).

This sequence belongs to the peptidase M48B family. Requires Zn(2+) as cofactor.

Its subcellular location is the cell inner membrane. The protein is Protease HtpX homolog of Chlorobium luteolum (strain DSM 273 / BCRC 81028 / 2530) (Pelodictyon luteolum).